The sequence spans 395 residues: Leucine aminopeptidase 1 (395 aa).

The signal sequence occupies residues 1 to 19 (MKHLSLLALAAVAPTTALA). Residues 20–95 (GVIDHQQVTF…SVKSFEQTKV (76 aa)) constitute a propeptide that is removed on maturation. A glycan (N-linked (GlcNAc...) asparagine) is linked at N187. Zn(2+) contacts are provided by H195, D214, E253, and D280. C329 and C333 are joined by a disulfide. A Zn(2+)-binding site is contributed by H362.

The protein belongs to the peptidase M28 family. M28E subfamily. In terms of assembly, monomer. Zn(2+) serves as cofactor.

The protein resides in the secreted. Its function is as follows. Extracellular aminopeptidase that allows assimilation of proteinaceous substrates. The chain is Leucine aminopeptidase 1 (LAP1) from Uncinocarpus reesii (strain UAMH 1704).